The following is a 348-amino-acid chain: GTPase Obg 1 (348 aa).

An Obg domain is found at 1 to 159 (MSFVDEAKIH…HCVLLKLKIV (159 aa)). One can recognise an OBG-type G domain in the interval 160-329 (SDVGIIGMPN…LHAQVKKAVV (170 aa)). Residues 166–173 (GMPNAGKS), 191–195 (FTTLE), 212–215 (DIPG), 279–282 (NKCD), and 310–312 (GDE) contribute to the GTP site. Mg(2+)-binding residues include Ser-173 and Thr-193.

The protein belongs to the TRAFAC class OBG-HflX-like GTPase superfamily. OBG GTPase family. Monomer. Mg(2+) is required as a cofactor.

Its subcellular location is the cytoplasm. Its function is as follows. An essential GTPase which binds GTP, GDP and possibly (p)ppGpp with moderate affinity, with high nucleotide exchange rates and a fairly low GTP hydrolysis rate. Plays a role in control of the cell cycle, stress response, ribosome biogenesis and in those bacteria that undergo differentiation, in morphogenesis control. The polypeptide is GTPase Obg 1 (Anaplasma marginale (strain St. Maries)).